We begin with the raw amino-acid sequence, 316 residues long: Lipoyl synthase (316 aa).

[4Fe-4S] cluster is bound by residues cysteine 66, cysteine 71, cysteine 77, cysteine 92, cysteine 96, cysteine 99, and serine 306. The 218-residue stretch at 78-295 (YSQQTATFMV…ADIAKSMGFK (218 aa)) folds into the Radical SAM core domain.

It belongs to the radical SAM superfamily. Lipoyl synthase family. [4Fe-4S] cluster serves as cofactor.

It localises to the cytoplasm. It carries out the reaction [[Fe-S] cluster scaffold protein carrying a second [4Fe-4S](2+) cluster] + N(6)-octanoyl-L-lysyl-[protein] + 2 oxidized [2Fe-2S]-[ferredoxin] + 2 S-adenosyl-L-methionine + 4 H(+) = [[Fe-S] cluster scaffold protein] + N(6)-[(R)-dihydrolipoyl]-L-lysyl-[protein] + 4 Fe(3+) + 2 hydrogen sulfide + 2 5'-deoxyadenosine + 2 L-methionine + 2 reduced [2Fe-2S]-[ferredoxin]. It participates in protein modification; protein lipoylation via endogenous pathway; protein N(6)-(lipoyl)lysine from octanoyl-[acyl-carrier-protein]: step 2/2. In terms of biological role, catalyzes the radical-mediated insertion of two sulfur atoms into the C-6 and C-8 positions of the octanoyl moiety bound to the lipoyl domains of lipoate-dependent enzymes, thereby converting the octanoylated domains into lipoylated derivatives. The chain is Lipoyl synthase from Rhodopirellula baltica (strain DSM 10527 / NCIMB 13988 / SH1).